A 395-amino-acid polypeptide reads, in one-letter code: 1-deoxy-D-xylulose 5-phosphate reductoisomerase (395 aa).

6 residues coordinate NADPH: Thr10, Gly11, Ser12, Ile13, Lys37, and Asn123. 1-deoxy-D-xylulose 5-phosphate is bound at residue Lys124. Residue Glu125 coordinates NADPH. A Mn(2+)-binding site is contributed by Asp149. The 1-deoxy-D-xylulose 5-phosphate site is built by Ser150, Glu151, Ser185, and His208. Glu151 serves as a coordination point for Mn(2+). Gly214 lines the NADPH pocket. Residues Ser221, Asn226, Lys227, and Glu230 each contribute to the 1-deoxy-D-xylulose 5-phosphate site. Mn(2+) is bound at residue Glu230.

Belongs to the DXR family. It depends on Mg(2+) as a cofactor. Requires Mn(2+) as cofactor.

The enzyme catalyses 2-C-methyl-D-erythritol 4-phosphate + NADP(+) = 1-deoxy-D-xylulose 5-phosphate + NADPH + H(+). It functions in the pathway isoprenoid biosynthesis; isopentenyl diphosphate biosynthesis via DXP pathway; isopentenyl diphosphate from 1-deoxy-D-xylulose 5-phosphate: step 1/6. Catalyzes the NADPH-dependent rearrangement and reduction of 1-deoxy-D-xylulose-5-phosphate (DXP) to 2-C-methyl-D-erythritol 4-phosphate (MEP). This chain is 1-deoxy-D-xylulose 5-phosphate reductoisomerase, found in Shewanella loihica (strain ATCC BAA-1088 / PV-4).